A 305-amino-acid chain; its full sequence is Dihydroorotate dehydrogenase B (NAD(+)), catalytic subunit (305 aa).

FMN-binding positions include serine 21 and 45-46; that span reads KG. Residues lysine 45 and 69–73 each bind substrate; that span reads NAVGL. 2 residues coordinate FMN: asparagine 99 and asparagine 127. Asparagine 127 is a binding site for substrate. The active-site Nucleophile is the cysteine 130. Residues lysine 165 and isoleucine 191 each coordinate FMN. 192–193 provides a ligand contact to substrate; it reads NT. Residues glycine 217, 243–244, and 265–266 each bind FMN; these read GG and GT.

This sequence belongs to the dihydroorotate dehydrogenase family. Type 1 subfamily. Heterotetramer of 2 PyrK and 2 PyrD type B subunits. The cofactor is FMN.

It localises to the cytoplasm. The enzyme catalyses (S)-dihydroorotate + NAD(+) = orotate + NADH + H(+). The protein operates within pyrimidine metabolism; UMP biosynthesis via de novo pathway; orotate from (S)-dihydroorotate (NAD(+) route): step 1/1. In terms of biological role, catalyzes the conversion of dihydroorotate to orotate with NAD(+) as electron acceptor. This Parabacteroides distasonis (strain ATCC 8503 / DSM 20701 / CIP 104284 / JCM 5825 / NCTC 11152) protein is Dihydroorotate dehydrogenase B (NAD(+)), catalytic subunit (pyrD).